The chain runs to 392 residues: 1-deoxy-D-xylulose 5-phosphate reductoisomerase (392 aa).

Residues Thr14, Gly15, Ser16, Ile17, Gly40, Gln43, and Asn126 each coordinate NADPH. 1-deoxy-D-xylulose 5-phosphate is bound at residue Lys127. Glu128 provides a ligand contact to NADPH. Asp150 contacts Mn(2+). 1-deoxy-D-xylulose 5-phosphate-binding residues include Ser151, Glu152, Ser176, and His199. Glu152 is a binding site for Mn(2+). Gly205 contacts NADPH. The 1-deoxy-D-xylulose 5-phosphate site is built by Ser212, Asn217, Lys218, and Glu221. A Mn(2+)-binding site is contributed by Glu221.

Belongs to the DXR family. Requires Mg(2+) as cofactor. The cofactor is Mn(2+).

The catalysed reaction is 2-C-methyl-D-erythritol 4-phosphate + NADP(+) = 1-deoxy-D-xylulose 5-phosphate + NADPH + H(+). It functions in the pathway isoprenoid biosynthesis; isopentenyl diphosphate biosynthesis via DXP pathway; isopentenyl diphosphate from 1-deoxy-D-xylulose 5-phosphate: step 1/6. Catalyzes the NADPH-dependent rearrangement and reduction of 1-deoxy-D-xylulose-5-phosphate (DXP) to 2-C-methyl-D-erythritol 4-phosphate (MEP). This is 1-deoxy-D-xylulose 5-phosphate reductoisomerase from Corynebacterium glutamicum (strain ATCC 13032 / DSM 20300 / JCM 1318 / BCRC 11384 / CCUG 27702 / LMG 3730 / NBRC 12168 / NCIMB 10025 / NRRL B-2784 / 534).